Consider the following 1018-residue polypeptide: UPF0182 protein Tfu_0541 (1018 aa).

7 helical membrane passes run 20 to 40, 64 to 84, 115 to 135, 171 to 191, 212 to 232, 254 to 274, and 287 to 307; these read LAPVGAAVVVIIAGIMFAANF, ALLFAGGALLMALAVGLSVYF, VFFWGLVGGLALLTGASATAE, VIIGYLYTAVVIAFIAGVVVH, VHLSVLLGVFLLLRAADYWLE, AVLYAKIILFFIALVCAVLFF, and VSLGLMVLSAILIGGVYPAIV. 2 disordered regions span residues 497–570 and 939–965; these read YPVD…QANN and GDEAPLEEPTTDGEAREEEEQPQASSD. Composition is skewed to acidic residues over residues 542–560 and 939–959; these read QDQEGQDGGEDAQGTEEEQ and GDEAPLEEPTTDGEAREEEEQ.

It belongs to the UPF0182 family.

The protein localises to the cell membrane. In Thermobifida fusca (strain YX), this protein is UPF0182 protein Tfu_0541.